A 340-amino-acid polypeptide reads, in one-letter code: tRNA N6-adenosine threonylcarbamoyltransferase (340 aa).

Positions 111 and 115 each coordinate Fe cation. Substrate contacts are provided by residues 134–138 (LVSGG), Asp-167, Gly-180, and Asn-276. Asp-304 serves as a coordination point for Fe cation.

It belongs to the KAE1 / TsaD family. Fe(2+) serves as cofactor.

It is found in the cytoplasm. The enzyme catalyses L-threonylcarbamoyladenylate + adenosine(37) in tRNA = N(6)-L-threonylcarbamoyladenosine(37) in tRNA + AMP + H(+). Required for the formation of a threonylcarbamoyl group on adenosine at position 37 (t(6)A37) in tRNAs that read codons beginning with adenine. Is involved in the transfer of the threonylcarbamoyl moiety of threonylcarbamoyl-AMP (TC-AMP) to the N6 group of A37, together with TsaE and TsaB. TsaD likely plays a direct catalytic role in this reaction. This Helicobacter pylori (strain Shi470) protein is tRNA N6-adenosine threonylcarbamoyltransferase.